The chain runs to 68 residues: Serine palmitoyltransferase small subunit A (68 aa).

At 1 to 9 the chain is on the cytoplasmic side; that stretch reads MAFGDAWKQ. The chain crosses the membrane as a helical span at residues 10 to 26; that stretch reads LSWFYYQYLLVTALYML. The Lumenal portion of the chain corresponds to 27-31; the sequence is EPWER. The helical transmembrane segment at 32-54 threads the bilayer; it reads TIFNSLLISVAAMAVYTGYVFMP. Topologically, residues 55–68 are cytoplasmic; it reads QHIMAILHYFEVVQ.

The protein belongs to the SPTSS family. SPTSSA subfamily. As to quaternary structure, component of the serine palmitoyltransferase (SPT) complex, which is composed of SPTLC1, SPTLC2 or SPTLC3 and SPTSSA or SPTSSB. The heterodimer consisting of SPTLC1 and SPTLC2/SPTLC3 forms the catalytic core of the enzyme, while SPTSSA or SPTSSB subunits determine substrate specificity. SPT also interacts with ORMDL proteins, especially ORMDL3, which negatively regulate SPT activity in the presence of ceramides.

The protein resides in the endoplasmic reticulum membrane. The protein operates within lipid metabolism; sphingolipid metabolism. Its function is as follows. Component of the serine palmitoyltransferase multisubunit enzyme (SPT) that catalyzes the initial and rate-limiting step in sphingolipid biosynthesis by condensing L-serine and activated acyl-CoA (most commonly palmitoyl-CoA) to form long-chain bases. The SPT complex is composed of SPTLC1, SPTLC2 or SPTLC3 and SPTSSA or SPTSSB. Within this complex, the heterodimer consisting of SPTLC1 and SPTLC2/SPTLC3 forms the catalytic core. Within the SPT complex, SPTSSA stimulates the catalytic activity and plays a role in substrate specificity, which depends upon the overall complex composition. The SPTLC1-SPTLC2-SPTSSA complex shows a strong preference for C16-CoA substrate, while the SPTLC1-SPTLC3-SPTSSA isozyme uses both C14-CoA and C16-CoA as substrates, with a slight preference for C14-CoA. Independently of its action as a SPT component, may be involved in MBOAT7 localization to mitochondria-associated membranes, a membrane bridge between the endoplasmic reticulum and mitochondria, may hence affect MBOAT7-catalyzed incorporation of arachidonic acid into phosphatidylinositol. The protein is Serine palmitoyltransferase small subunit A (sptssa) of Danio rerio (Zebrafish).